Here is a 114-residue protein sequence, read N- to C-terminus: U17-barytoxin-Tl1a (114 aa).

The signal sequence occupies residues 1 to 20; that stretch reads MKTIIVFLSLLVLATKFGDA. Residues 21 to 74 constitute a propeptide that is removed on maturation; that stretch reads NEGVNQEQMKEVIQNEFREDFLNEMAAMSLLQQLEAIESTLLEKEADRNSRQKR. Cystine bridges form between C75/C88, C82/C93, and C87/C108.

Belongs to the neurotoxin 14 (magi-1) family. 03 (ICK-30-40) subfamily. As to expression, expressed by the venom gland.

Its subcellular location is the secreted. Ion channel inhibitor. The polypeptide is U17-barytoxin-Tl1a (Trittame loki (Brush-footed trapdoor spider)).